The primary structure comprises 493 residues: Chitobiosyldiphosphodolichol beta-mannosyltransferase (493 aa).

The Lumenal portion of the chain corresponds to 1-71; sequence MNRVAVVVLG…PISMSNSFKK (71 aa). A helical membrane pass occupies residues 72-92; the sequence is IPLISIFMWPLLAICKVLFQI. Residues 93-109 are Cytoplasmic-facing; sequence IQLMYVLLVKVPSPLNT. The segment at residues 110 to 130 is an intramembrane region (helical); that stretch reads ILVQSPPAIPTIFVMQIVCWI. The Cytoplasmic portion of the chain corresponds to 131 to 493; sequence RGVHLVIDWH…SSSNSKSKKD (363 aa). The segment at 462–493 is disordered; it reads FIPSSSSSSSSSSSSSSSSSSSSSSNSKSKKD. Positions 465 to 493 are enriched in low complexity; sequence SSSSSSSSSSSSSSSSSSSSSSNSKSKKD.

It belongs to the glycosyltransferase group 1 family. Glycosyltransferase 33 subfamily.

It is found in the endoplasmic reticulum membrane. The catalysed reaction is an N,N'-diacetylchitobiosyl-diphospho-di-trans,poly-cis-dolichol + GDP-alpha-D-mannose = a beta-D-Man-(1-&gt;4)-beta-D-GlcNAc-(1-&gt;4)-alpha-D-GlcNAc-diphospho-di-trans,poly-cis-dolichol + GDP + H(+). It participates in protein modification; protein glycosylation. Functionally, participates in the formation of the lipid-linked precursor oligosaccharide for N-glycosylation. Involved in assembling the dolichol-pyrophosphate-GlcNAc(2)-Man(5) intermediate on the cytoplasmic surface of the ER. This Dictyostelium discoideum (Social amoeba) protein is Chitobiosyldiphosphodolichol beta-mannosyltransferase (alg1).